The chain runs to 387 residues: DNA primase small subunit PriS (387 aa).

Residues Asp-98, Asp-100, and Asp-289 contribute to the active site.

The protein belongs to the eukaryotic-type primase small subunit family. In terms of assembly, heterodimer of a small subunit (PriS) and a large subunit (PriL). The cofactor is Mg(2+). Requires Mn(2+) as cofactor.

Catalytic subunit of DNA primase, an RNA polymerase that catalyzes the synthesis of short RNA molecules used as primers for DNA polymerase during DNA replication. The small subunit contains the primase catalytic core and has DNA synthesis activity on its own. Binding to the large subunit stabilizes and modulates the activity, increasing the rate of DNA synthesis while decreasing the length of the DNA fragments, and conferring RNA synthesis capability. The DNA polymerase activity may enable DNA primase to also catalyze primer extension after primer synthesis. May also play a role in DNA repair. This Halorubrum lacusprofundi (strain ATCC 49239 / DSM 5036 / JCM 8891 / ACAM 34) protein is DNA primase small subunit PriS.